Consider the following 262-residue polypeptide: Small ribosomal subunit protein uS2 (262 aa).

This sequence belongs to the universal ribosomal protein uS2 family.

The sequence is that of Small ribosomal subunit protein uS2 from Borreliella burgdorferi (strain ZS7) (Borrelia burgdorferi).